Here is a 58-residue protein sequence, read N- to C-terminus: MPPCLTTWLSQLLKDNSYPLVLGPKNFGATPNKSNNHAHYYNHPNPDFPNSPHPYHPR.

Residues 27-58 form a disordered region; that stretch reads FGATPNKSNNHAHYYNHPNPDFPNSPHPYHPR. Residues 35–45 show a composition bias toward low complexity; that stretch reads NNHAHYYNHPN. Residues 46-58 show a composition bias toward pro residues; the sequence is PDFPNSPHPYHPR.

In terms of assembly, interacts with IMMT/mitofilin. In terms of tissue distribution, detected in cerebrospinal fluid (at protein level).

It is found in the mitochondrion. The protein localises to the nucleus. Its function is as follows. Increases neural cell metabolic activity and mitochondrial oxygen consumption rate. This Homo sapiens (Human) protein is Protein SHMOOSE.